The chain runs to 189 residues: Peptidyl-tRNA hydrolase (189 aa).

TRNA is bound at residue Tyr15. His20 serves as the catalytic Proton acceptor. Residues Phe66, Asn68, and Asn114 each contribute to the tRNA site.

Belongs to the PTH family. As to quaternary structure, monomer.

It is found in the cytoplasm. It catalyses the reaction an N-acyl-L-alpha-aminoacyl-tRNA + H2O = an N-acyl-L-amino acid + a tRNA + H(+). Its function is as follows. Hydrolyzes ribosome-free peptidyl-tRNAs (with 1 or more amino acids incorporated), which drop off the ribosome during protein synthesis, or as a result of ribosome stalling. In terms of biological role, catalyzes the release of premature peptidyl moieties from peptidyl-tRNA molecules trapped in stalled 50S ribosomal subunits, and thus maintains levels of free tRNAs and 50S ribosomes. This chain is Peptidyl-tRNA hydrolase, found in Dichelobacter nodosus (strain VCS1703A).